The primary structure comprises 433 residues: Apolipoprotein B (433 aa).

N-linked (GlcNAc...) asparagine glycosylation is present at Asn158.

The protein resides in the cytoplasm. It localises to the secreted. The protein localises to the lipid droplet. Functionally, apolipoprotein B is a major protein constituent of chylomicrons, VLDL and LDL. It functions as a recognition signal for the cellular binding and internalization of LDL particles by the apoB/E receptor. The chain is Apolipoprotein B (APOB) from Gallus gallus (Chicken).